We begin with the raw amino-acid sequence, 209 residues long: Ribulose-phosphate 3-epimerase (209 aa).

Substrate is bound at residue S8. Positions 33, 35, 64, and 170 each coordinate a divalent metal cation. The active-site Proton acceptor is D35. Residues H64, 170-172 (DGG), and 191-192 (GS) contribute to the substrate site. The Proton donor role is filled by D170.

Belongs to the ribulose-phosphate 3-epimerase family. It depends on a divalent metal cation as a cofactor.

The enzyme catalyses D-ribulose 5-phosphate = D-xylulose 5-phosphate. The protein operates within carbohydrate degradation. In terms of biological role, catalyzes the reversible epimerization of D-ribulose 5-phosphate to D-xylulose 5-phosphate. The polypeptide is Ribulose-phosphate 3-epimerase (Mycoplasma genitalium (strain ATCC 33530 / DSM 19775 / NCTC 10195 / G37) (Mycoplasmoides genitalium)).